A 204-amino-acid polypeptide reads, in one-letter code: E2 ubiquitin-conjugating enzyme PEX4 (204 aa).

Positions 2-196 constitute a UBC core domain; it reads SAEKRLLQEY…IEYYVGRYSI (195 aa). The active-site Glycyl thioester intermediate is the C133.

The protein belongs to the ubiquitin-conjugating enzyme family.

Its subcellular location is the peroxisome membrane. The catalysed reaction is S-ubiquitinyl-[E1 ubiquitin-activating enzyme]-L-cysteine + [E2 ubiquitin-conjugating enzyme]-L-cysteine = [E1 ubiquitin-activating enzyme]-L-cysteine + S-ubiquitinyl-[E2 ubiquitin-conjugating enzyme]-L-cysteine.. It functions in the pathway protein modification; protein ubiquitination. In terms of biological role, E2 ubiquitin-conjugating enzyme involved in peroxisome biosynthesis. Acts late in peroxisomal matrix protein import, after matrix protein translocation. Required for both monoubiquitination and polyubiquitination of coreceptor PEX20. polyubiquitination of PEX20 at conserved lysine 'Lys-19' near the N-terminus leads to its and proteasomal degradation, whereas a monoubiquitination at the conserved cysteine 'Cys-8' is essential for its recycling. The sequence is that of E2 ubiquitin-conjugating enzyme PEX4 from Komagataella phaffii (strain GS115 / ATCC 20864) (Yeast).